We begin with the raw amino-acid sequence, 314 residues long: RNA 2',3'-cyclic phosphodiesterase (314 aa).

Histidine 43 acts as the Proton donor in catalysis. 2 short sequence motifs (HXTX) span residues 43 to 46 (HITL) and 129 to 132 (HITI). Histidine 129 functions as the Proton acceptor in the catalytic mechanism.

Belongs to the 2H phosphoesterase superfamily. ThpR family.

It catalyses the reaction a 3'-end 2',3'-cyclophospho-ribonucleotide-RNA + H2O = a 3'-end 2'-phospho-ribonucleotide-RNA + H(+). Its function is as follows. Hydrolyzes RNA 2',3'-cyclic phosphodiester to an RNA 2'-phosphomonoester. The polypeptide is RNA 2',3'-cyclic phosphodiesterase (Geobacillus stearothermophilus (Bacillus stearothermophilus)).